The sequence spans 484 residues: MRWLLSCLFLVAFASCSKVLELTKDNFHSELKSIPVALVKFYAPWCGHCKKLAPEFTSAAQIISGKTNDVKLVKVDCTTQESICSEFGVSGYPTLKIFRNGDLDGEYNGPRNANGIANYMISRAGPVSKEVSTVSDVENVLSDDKPTVFAFVKSSSDPLIKTFMALAKSMVDDAVFCHSHNNLFVTPSDNELRVYLPKRLRTKFEDDFAVYKGELESNNIKDWIRKHGQGLVGYRSPSNTFYFENSDLVVLYNNQSIDSYPSGVKYLRNRVLKTLKDNPQKFKNLVFAYSFADDFSYEISDYGIEADKLPAVVIQSKDKKYKLEKFSLDAFSDFLNKFEDGLLTPHVKSEPLPTDDSSAVKKLVALNFDEIVNNEEKDVMVVFHAGWCGHCKNLMPKYEEAASKVKNEPNLVLAAMDATANDVPSPYQVRGFPTIYFVPKGKKSSPVSYEGGRDTNDIIKYLAREATEELIGYDRSGNPKKSEL.

A signal peptide spans 1-14 (MRWLLSCLFLVAFA). Thioredoxin domains are found at residues 15–125 (SCSK…SRAG) and 338–467 (FEDG…REAT). Residues Cys46, Cys49, Cys388, and Cys391 each act as nucleophile in the active site. 2 cysteine pairs are disulfide-bonded: Cys46-Cys49 and Cys388-Cys391. Residues 481–484 (KSEL) carry the Prevents secretion from ER motif.

This sequence belongs to the protein disulfide isomerase family.

The protein localises to the endoplasmic reticulum lumen. The catalysed reaction is Catalyzes the rearrangement of -S-S- bonds in proteins.. The protein is Probable protein disulfide-isomerase ER-60 of Schistosoma mansoni (Blood fluke).